The sequence spans 130 residues: Acyl carrier protein 2, chloroplastic (130 aa).

A chloroplast-targeting transit peptide spans 1 to 48; the sequence is MASITGSSVSFKCAPLQSSFNSKNYALKSSVTFWRRTPVMPRGLSVSC. The Carrier domain maps to 52–127; the sequence is PEMVTKVSDI…EAADMIEALQ (76 aa). Serine 87 carries the post-translational modification O-(pantetheine 4'-phosphoryl)serine.

Belongs to the acyl carrier protein (ACP) family. Post-translationally, 4'-phosphopantetheine is transferred from CoA to a specific serine of apo-ACP by acpS. This modification is essential for activity because fatty acids are bound in thioester linkage to the sulfhydryl of the prosthetic group. Roots, leaves and seeds.

The protein resides in the plastid. The protein localises to the chloroplast. It participates in lipid metabolism; fatty acid biosynthesis. Its function is as follows. Carrier of the growing fatty acid chain in fatty acid biosynthesis. The protein is Acyl carrier protein 2, chloroplastic (ACL1.2) of Spinacia oleracea (Spinach).